Consider the following 293-residue polypeptide: Pyridoxal 5'-phosphate synthase subunit PdxS (293 aa).

D-ribose 5-phosphate is bound at residue Asp-23. Lys-80 functions as the Schiff-base intermediate with D-ribose 5-phosphate in the catalytic mechanism. D-ribose 5-phosphate is bound at residue Gly-152. D-glyceraldehyde 3-phosphate is bound at residue Arg-164. Residues Gly-213 and Gly-234–Ser-235 each bind D-ribose 5-phosphate.

This sequence belongs to the PdxS/SNZ family. In terms of assembly, in the presence of PdxT, forms a dodecamer of heterodimers.

It carries out the reaction aldehydo-D-ribose 5-phosphate + D-glyceraldehyde 3-phosphate + L-glutamine = pyridoxal 5'-phosphate + L-glutamate + phosphate + 3 H2O + H(+). Its pathway is cofactor biosynthesis; pyridoxal 5'-phosphate biosynthesis. Functionally, catalyzes the formation of pyridoxal 5'-phosphate from ribose 5-phosphate (RBP), glyceraldehyde 3-phosphate (G3P) and ammonia. The ammonia is provided by the PdxT subunit. Can also use ribulose 5-phosphate and dihydroxyacetone phosphate as substrates, resulting from enzyme-catalyzed isomerization of RBP and G3P, respectively. The sequence is that of Pyridoxal 5'-phosphate synthase subunit PdxS from Roseiflexus castenholzii (strain DSM 13941 / HLO8).